The following is a 420-amino-acid chain: Serine hydroxymethyltransferase (420 aa).

(6S)-5,6,7,8-tetrahydrofolate-binding positions include Leu-118 and Gly-122–Leu-124. Lys-227 carries the post-translational modification N6-(pyridoxal phosphate)lysine.

It belongs to the SHMT family. As to quaternary structure, homodimer. It depends on pyridoxal 5'-phosphate as a cofactor.

It is found in the cytoplasm. It catalyses the reaction (6R)-5,10-methylene-5,6,7,8-tetrahydrofolate + glycine + H2O = (6S)-5,6,7,8-tetrahydrofolate + L-serine. It functions in the pathway one-carbon metabolism; tetrahydrofolate interconversion. Its pathway is amino-acid biosynthesis; glycine biosynthesis; glycine from L-serine: step 1/1. Catalyzes the reversible interconversion of serine and glycine with tetrahydrofolate (THF) serving as the one-carbon carrier. This reaction serves as the major source of one-carbon groups required for the biosynthesis of purines, thymidylate, methionine, and other important biomolecules. Also exhibits THF-independent aldolase activity toward beta-hydroxyamino acids, producing glycine and aldehydes, via a retro-aldol mechanism. This is Serine hydroxymethyltransferase from Persephonella marina (strain DSM 14350 / EX-H1).